Consider the following 827-residue polypeptide: Sporozoite surface protein 2 (827 aa).

The signal sequence occupies residues 1 to 22; it reads MKLLGNSKYIFVVLLLCISVFL. The region spanning 43–228 is the VWFA domain; it reads DIHILLDGSG…NMIKPFLTKV (186 aa). Residues 235–281 form the TSP type-1 domain; sequence IAHCGKWEEWSECSTTCDEGRKIRRRQILHPGCVSEMTTPCKVRDCP. Intrachain disulfides connect C238-C267, C247-C275, and C251-C280. The disordered stretch occupies residues 278–761; the sequence is RDCPQIPIPP…NKNQSKSNNG (484 aa). Residues 301–388 show a composition bias toward low complexity; the sequence is EEPVNPNDPN…NNPNDPSNPN (88 aa). Residues 306-392 are 29 X 3 AA tandem repeats; sequence PNDPNDPNNP…DPSNPNNPNP (87 aa). Residues 392–407 show a composition bias toward basic residues; that stretch reads PKKRNPKRRNPNKPKP. The tract at residues 402 to 514 is 20 tandem tetra-/hexapeptide repeats; the sequence is PNKPKPNKPN…EPSNPNEPSN (113 aa). The span at 408–464 shows a compositional bias: pro residues; it reads NKPNPNKPNPNEPSNPNKPNPNEPSNPNKPNPNEPSNPNKPNPNEPSNPNKPNPNEP. The segment covering 465 to 567 has biased composition (low complexity); it reads LNPNEPSNPN…KEPSNPNEPS (103 aa). 2 consecutive repeat copies span residues 603–613 and 614–624. The interval 603–624 is 2 X 11 AA tandem repeats; the sequence is PEESNPKEPINPEESNPKEPIN. Residues 657–671 show a composition bias toward polar residues; it reads KGNNIPSNLPENPSD. Residues 709-724 show a composition bias toward basic and acidic residues; that stretch reads YKGHEERIPKPHRSND. A helical transmembrane segment spans residues 764 to 787; that stretch reads IAGGIIGGLAILGCAGVGYNFIAG.

Its subcellular location is the cell membrane. The protein is Sporozoite surface protein 2 (SSP2) of Plasmodium yoelii yoelii.